A 434-amino-acid chain; its full sequence is Putative D-alanyl-D-alanine carboxypeptidase (434 aa).

Residues 7-25 (YLSLLAVSCSVSAAKYPVL) traverse the membrane as a helical; Signal-anchor segment.

The protein belongs to the peptidase S12 family. YfeW subfamily.

The protein resides in the cell inner membrane. The catalysed reaction is Preferential cleavage: (Ac)2-L-Lys-D-Ala-|-D-Ala. Also transpeptidation of peptidyl-alanyl moieties that are N-acyl substituents of D-alanine.. In terms of biological role, penicillin-binding protein. Has low DD-carboxypeptidase activity. The polypeptide is Putative D-alanyl-D-alanine carboxypeptidase (Escherichia coli (strain K12)).